The sequence spans 999 residues: Hypoxia up-regulated protein 1 (999 aa).

The N-terminal stretch at 1–32 (MAATVRRQRPRRLLCWALVAVLLADLLALSDT) is a signal peptide. N155, N222, and N515 each carry an N-linked (GlcNAc...) asparagine glycan. The disordered stretch occupies residues 564 to 694 (VEDSPEEEST…KKQKPARKQK (131 aa)). S567 is subject to Phosphoserine. Polar residues predominate over residues 574 to 583 (LTKLGNTISS). Residue N596 is glycosylated (N-linked (GlcNAc...) asparagine). Composition is skewed to basic and acidic residues over residues 611-626 (GSKD…KEEA) and 641-668 (PKGD…KPNE). N-linked (GlcNAc...) asparagine glycosylation is found at N830, N862, and N869. The residue at position 883 (K883) is an N6-acetyllysine. Residues 909–999 (AKFTKPRPRP…QKRPLKNDEL (91 aa)) form a disordered region. 2 N-linked (GlcNAc...) asparagine glycosylation sites follow: N922 and N931. Residues 949–962 (EEAKAILEPDKEGL) are compositionally biased toward basic and acidic residues. The short motif at 996–999 (NDEL) is the Prevents secretion from ER element.

The protein belongs to the heat shock protein 70 family. As to quaternary structure, part of a large chaperone multiprotein complex comprising DNAJB11, HSP90B1, HSPA5, HYOU, PDIA2, PDIA4, PDIA6, PPIB, SDF2L1, UGGT1 and very small amounts of ERP29, but not, or at very low levels, CALR nor CANX. Selectively expressed by cultured astrocytes but not endothelial cells, microglia or neurons.

It is found in the endoplasmic reticulum lumen. Its function is as follows. Has a pivotal role in cytoprotective cellular mechanisms triggered by oxygen deprivation. Promotes HSPA5/BiP-mediated ATP nucleotide exchange and thereby activates the unfolded protein response (UPR) pathway in the presence of endoplasmic reticulum stress. May play a role as a molecular chaperone and participate in protein folding. The sequence is that of Hypoxia up-regulated protein 1 (Hyou1) from Rattus norvegicus (Rat).